A 613-amino-acid chain; its full sequence is V-type proton ATPase catalytic subunit A isoform 2 (613 aa).

240–247 is an ATP binding site; that stretch reads GAFGCGKT.

Belongs to the ATPase alpha/beta chains family. As to quaternary structure, V-ATPase is a heteromultimeric enzyme composed of a peripheral catalytic V1 complex (main components: subunits A, B, C, D, E, and F) attached to an integral membrane V0 proton pore complex (main component: the proteolipid protein).

It catalyses the reaction ATP + H2O + 4 H(+)(in) = ADP + phosphate + 5 H(+)(out). Its function is as follows. Catalytic subunit of the peripheral V1 complex of vacuolar ATPase. V-ATPase vacuolar ATPase is responsible for acidifying a variety of intracellular compartments in eukaryotic cells. This Acetabularia acetabulum (Mermaid's wine glass) protein is V-type proton ATPase catalytic subunit A isoform 2.